Reading from the N-terminus, the 273-residue chain is NH(3)-dependent NAD(+) synthetase (273 aa).

46–53 serves as a coordination point for ATP; sequence GISGGQDS. D52 is a binding site for Mg(2+). R139 provides a ligand contact to deamido-NAD(+). Residue T159 coordinates ATP. E164 serves as a coordination point for Mg(2+). K172 and D179 together coordinate deamido-NAD(+). K188 and T210 together coordinate ATP. Residue 259–260 coordinates deamido-NAD(+); that stretch reads HK.

This sequence belongs to the NAD synthetase family. As to quaternary structure, homodimer.

It catalyses the reaction deamido-NAD(+) + NH4(+) + ATP = AMP + diphosphate + NAD(+) + H(+). It functions in the pathway cofactor biosynthesis; NAD(+) biosynthesis; NAD(+) from deamido-NAD(+) (ammonia route): step 1/1. In terms of biological role, catalyzes the ATP-dependent amidation of deamido-NAD to form NAD. Uses ammonia as a nitrogen source. In Streptococcus thermophilus (strain ATCC BAA-250 / LMG 18311), this protein is NH(3)-dependent NAD(+) synthetase.